The following is a 314-amino-acid chain: Homoserine kinase (314 aa).

95 to 105 contributes to the ATP binding site; that stretch reads PHSRGLGSSAS.

The protein belongs to the GHMP kinase family. Homoserine kinase subfamily.

The protein resides in the cytoplasm. It catalyses the reaction L-homoserine + ATP = O-phospho-L-homoserine + ADP + H(+). It functions in the pathway amino-acid biosynthesis; L-threonine biosynthesis; L-threonine from L-aspartate: step 4/5. Functionally, catalyzes the ATP-dependent phosphorylation of L-homoserine to L-homoserine phosphate. In Rhodococcus erythropolis (strain PR4 / NBRC 100887), this protein is Homoserine kinase.